The following is a 101-amino-acid chain: A-type ATP synthase subunit K (101 aa).

A run of 3 helical transmembrane segments spans residues 5–25 (WLPF…AQAP), 37–57 (IGAG…VGMA), and 75–95 (ILIF…FAVL).

It belongs to the V-ATPase proteolipid subunit family. As to quaternary structure, has multiple subunits with at least A(3), B(3), C, D, E, F, H, I and proteolipid K(x). Post-translationally, the N-terminus is blocked.

It is found in the cell membrane. In terms of biological role, component of the A-type ATP synthase that produces ATP from ADP in the presence of a proton gradient across the membrane. This chain is A-type ATP synthase subunit K, found in Sulfurisphaera tokodaii (strain DSM 16993 / JCM 10545 / NBRC 100140 / 7) (Sulfolobus tokodaii).